We begin with the raw amino-acid sequence, 373 residues long: Anhydro-N-acetylmuramic acid kinase (373 aa).

12–19 (GTSLDGVD) serves as a coordination point for ATP.

Belongs to the anhydro-N-acetylmuramic acid kinase family.

The enzyme catalyses 1,6-anhydro-N-acetyl-beta-muramate + ATP + H2O = N-acetyl-D-muramate 6-phosphate + ADP + H(+). The protein operates within amino-sugar metabolism; 1,6-anhydro-N-acetylmuramate degradation. It functions in the pathway cell wall biogenesis; peptidoglycan recycling. In terms of biological role, catalyzes the specific phosphorylation of 1,6-anhydro-N-acetylmuramic acid (anhMurNAc) with the simultaneous cleavage of the 1,6-anhydro ring, generating MurNAc-6-P. Is required for the utilization of anhMurNAc either imported from the medium or derived from its own cell wall murein, and thus plays a role in cell wall recycling. In Salmonella agona (strain SL483), this protein is Anhydro-N-acetylmuramic acid kinase.